Consider the following 165-residue polypeptide: FELPSIPFPSPGSDEILFVVRDTTFNTKEPVNVKVSDFWTNRNVKRKPYEDVYGQSVFTTSGSKWLTSYMTVSINNKDYTMAAVSGYKDGFSSVFVKSGQIQLQHYYNSVADFVGGDENSIPSKTYLDETPSYFVNVEAYESGSGNILVMCISNKESYFECEEQQ.

An intrachain disulfide couples C151 to C161.

It belongs to the TDH hemolysin family. Homodimer.

Its function is as follows. Bacterial hemolysins are exotoxins that attack blood cell membranes and cause cell rupture by mechanisms not clearly defined. The polypeptide is Hemolysin, heat labile (Grimontia hollisae (Vibrio hollisae)).